The primary structure comprises 213 residues: Probable germin-like protein subfamily 2 member 5 (213 aa).

The N-terminal stretch at 1-22 (MASFATHLVVVVTMLFVAMASA) is a signal peptide. C29 and C44 are oxidised to a cystine. Residues 58–203 (KGLANIAATN…SFQLKHKQVK (146 aa)) form the Cupin type-1 domain. N67 carries an N-linked (GlcNAc...) asparagine glycan. 4 residues coordinate Mn(2+): H106, H108, E113, and H152.

The protein belongs to the germin family. As to quaternary structure, oligomer (believed to be a pentamer but probably hexamer).

It is found in the secreted. The protein resides in the extracellular space. The protein localises to the apoplast. In terms of biological role, may play a role in plant defense. Probably has no oxalate oxidase activity even if the active site is conserved. This Arabidopsis thaliana (Mouse-ear cress) protein is Probable germin-like protein subfamily 2 member 5.